The following is a 606-amino-acid chain: DNA mismatch repair protein MutL (606 aa).

The tract at residues 340–366 (MNAFRPGYSPSGLRPSPSATWSAATSP) is disordered. Over residues 353-366 (RPSPSATWSAATSP) the composition is skewed to low complexity.

This sequence belongs to the DNA mismatch repair MutL/HexB family.

This protein is involved in the repair of mismatches in DNA. It is required for dam-dependent methyl-directed DNA mismatch repair. May act as a 'molecular matchmaker', a protein that promotes the formation of a stable complex between two or more DNA-binding proteins in an ATP-dependent manner without itself being part of a final effector complex. The protein is DNA mismatch repair protein MutL of Agrobacterium fabrum (strain C58 / ATCC 33970) (Agrobacterium tumefaciens (strain C58)).